The primary structure comprises 196 residues: MNPREHGKRSIDNETRSALKRQRPAVIWLTGLSGAGKSTIASALELALFEQKKHTFLLDGDDLRLGLCRNLGYSDEDRTENIRRIAEVAKILLEAGLIVIVATISPFSRDRRLSRELIGIEHFIEVFVDTPLSECERRDPKGLYRKARSGKIENFTGIDSIYETPAQPNITIDTLSEDPDLAVKRIISYLETNQPA.

31 to 38 (GLSGAGKS) serves as a coordination point for ATP. S105 acts as the Phosphoserine intermediate in catalysis.

This sequence belongs to the APS kinase family.

It catalyses the reaction adenosine 5'-phosphosulfate + ATP = 3'-phosphoadenylyl sulfate + ADP + H(+). It functions in the pathway sulfur metabolism; hydrogen sulfide biosynthesis; sulfite from sulfate: step 2/3. Its function is as follows. Catalyzes the synthesis of activated sulfate. The polypeptide is Adenylyl-sulfate kinase (cysC) (Pseudomonas aeruginosa (strain ATCC 15692 / DSM 22644 / CIP 104116 / JCM 14847 / LMG 12228 / 1C / PRS 101 / PAO1)).